Reading from the N-terminus, the 230-residue chain is uncharacterized protein (230 aa).

This is an uncharacterized protein from Acanthamoeba polyphaga (Amoeba).